The primary structure comprises 490 residues: Aspartyl/glutamyl-tRNA(Asn/Gln) amidotransferase subunit B (490 aa).

It belongs to the GatB/GatE family. GatB subfamily. As to quaternary structure, heterotrimer of A, B and C subunits.

It catalyses the reaction L-glutamyl-tRNA(Gln) + L-glutamine + ATP + H2O = L-glutaminyl-tRNA(Gln) + L-glutamate + ADP + phosphate + H(+). The enzyme catalyses L-aspartyl-tRNA(Asn) + L-glutamine + ATP + H2O = L-asparaginyl-tRNA(Asn) + L-glutamate + ADP + phosphate + 2 H(+). In terms of biological role, allows the formation of correctly charged Asn-tRNA(Asn) or Gln-tRNA(Gln) through the transamidation of misacylated Asp-tRNA(Asn) or Glu-tRNA(Gln) in organisms which lack either or both of asparaginyl-tRNA or glutaminyl-tRNA synthetases. The reaction takes place in the presence of glutamine and ATP through an activated phospho-Asp-tRNA(Asn) or phospho-Glu-tRNA(Gln). The protein is Aspartyl/glutamyl-tRNA(Asn/Gln) amidotransferase subunit B of Burkholderia thailandensis (strain ATCC 700388 / DSM 13276 / CCUG 48851 / CIP 106301 / E264).